A 121-amino-acid chain; its full sequence is Large ribosomal subunit protein uL14c (121 aa).

It belongs to the universal ribosomal protein uL14 family. As to quaternary structure, part of the 50S ribosomal subunit.

Its subcellular location is the plastid. The protein localises to the chloroplast. Its function is as follows. Binds to 23S rRNA. This Thalassiosira pseudonana (Marine diatom) protein is Large ribosomal subunit protein uL14c.